Here is a 394-residue protein sequence, read N- to C-terminus: Anhydro-N-acetylmuramic acid kinase (394 aa).

11–18 (GTSADGID) contributes to the ATP binding site.

Belongs to the anhydro-N-acetylmuramic acid kinase family.

It catalyses the reaction 1,6-anhydro-N-acetyl-beta-muramate + ATP + H2O = N-acetyl-D-muramate 6-phosphate + ADP + H(+). The protein operates within amino-sugar metabolism; 1,6-anhydro-N-acetylmuramate degradation. It functions in the pathway cell wall biogenesis; peptidoglycan recycling. Functionally, catalyzes the specific phosphorylation of 1,6-anhydro-N-acetylmuramic acid (anhMurNAc) with the simultaneous cleavage of the 1,6-anhydro ring, generating MurNAc-6-P. Is required for the utilization of anhMurNAc either imported from the medium or derived from its own cell wall murein, and thus plays a role in cell wall recycling. This is Anhydro-N-acetylmuramic acid kinase from Deinococcus geothermalis (strain DSM 11300 / CIP 105573 / AG-3a).